The following is a 251-amino-acid chain: MAVHLLIVDALNLIRRIHAVQGSPCAETCLHALEQLIVHSQPTHAVAVFDDDARNSGWRHQRLPDYKAGRPPMPDELHNEMPAIRAAFEQRGVQCWVSSGNEADDLAATLAVKVTQAGHQATIVSTDKGYCQLLSPTLRIRDYFQKRWLDAPFIEKEFGVLPQQLPDYWGLAGISSSKVPGVAGIGPKSATQLLVQFQTLEGIYAHLDEVAEKWCKKLEAHKEMAFLCRDIARLQTDLHIDGNLQQLRLTR.

Aspartate 104 provides a ligand contact to Mg(2+). Residues 160-249 (VLPQQLPDYW…IDGNLQQLRL (90 aa)) enclose the 5'-3' exonuclease domain. K(+)-binding residues include leucine 171, alanine 172, proline 180, valine 182, and isoleucine 185. The segment at 184–189 (GIGPKS) is interaction with DNA.

Belongs to the Xni family. Mg(2+) serves as cofactor. Requires K(+) as cofactor.

Its function is as follows. Has flap endonuclease activity. During DNA replication, flap endonucleases cleave the 5'-overhanging flap structure that is generated by displacement synthesis when DNA polymerase encounters the 5'-end of a downstream Okazaki fragment. The polypeptide is Flap endonuclease Xni (Citrobacter koseri (strain ATCC BAA-895 / CDC 4225-83 / SGSC4696)).